A 95-amino-acid polypeptide reads, in one-letter code: uncharacterized protein (95 aa).

A signal peptide spans 1–22 (MLPGFTMIITSLLLTFFREVEH). Residues 23–52 (LLPECLTITNTPQRTLVLIQRFTLLQKVMT) lie on the Extracellular side of the membrane. Residues 53 to 69 (IHLLLSIGTLGSLFTLH) form a helical membrane-spanning segment. The Cytoplasmic segment spans residues 70-95 (PQLLKTNLLQKLHKELNSNLDYLISC).

Its subcellular location is the host membrane. This is an uncharacterized protein from Acidianus bottle-shaped virus (isolate Italy/Pozzuoli) (ABV).